Reading from the N-terminus, the 260-residue chain is Ditrans,polycis-undecaprenyl-diphosphate synthase ((2E,6E)-farnesyl-diphosphate specific) (260 aa).

The active site involves aspartate 20. Position 20 (aspartate 20) interacts with Mg(2+). Residues 21-24, tryptophan 25, arginine 33, histidine 37, and 65-67 each bind substrate; these read GNGR and SSE. Asparagine 68 (proton acceptor) is an active-site residue. Substrate-binding residues include tryptophan 69, arginine 71, and arginine 188. Residue histidine 193 participates in Mg(2+) binding. 194–196 is a substrate binding site; sequence RIS. Glutamate 207 serves as a coordination point for Mg(2+).

It belongs to the UPP synthase family. As to quaternary structure, homodimer. Mg(2+) serves as cofactor.

The enzyme catalyses 8 isopentenyl diphosphate + (2E,6E)-farnesyl diphosphate = di-trans,octa-cis-undecaprenyl diphosphate + 8 diphosphate. Functionally, catalyzes the sequential condensation of isopentenyl diphosphate (IPP) with (2E,6E)-farnesyl diphosphate (E,E-FPP) to yield (2Z,6Z,10Z,14Z,18Z,22Z,26Z,30Z,34E,38E)-undecaprenyl diphosphate (di-trans,octa-cis-UPP). UPP is the precursor of glycosyl carrier lipid in the biosynthesis of bacterial cell wall polysaccharide components such as peptidoglycan and lipopolysaccharide. This Wigglesworthia glossinidia brevipalpis protein is Ditrans,polycis-undecaprenyl-diphosphate synthase ((2E,6E)-farnesyl-diphosphate specific).